The following is a 261-amino-acid chain: Putative cytochrome YdhU (261 aa).

Residues 25 to 45 (FWPVWLIIAGVLLVGMWLVLG) traverse the membrane as a helical segment. Histidine 77 is a heme b binding site. Transmembrane regions (helical) follow at residues 81-101 (ALLFVLLLASGLINHFAMVGA), 108-128 (VAVHEVCGFLLLACWLGFVLI), and 182-202 (VAYVGVMYGLLPLLLLTGLLC). Histidine 111 lines the heme b pocket. The heme b site is built by histidine 223 and histidine 237. The chain crosses the membrane as a helical span at residues 224 to 244 (FALAFISLFFIFGHLYLCTTG). Residue histidine 237 participates in a menaquinone binding.

The protein belongs to the PhsC family. The cofactor is heme.

The protein localises to the cell inner membrane. This chain is Putative cytochrome YdhU (ydhU), found in Escherichia coli (strain K12).